We begin with the raw amino-acid sequence, 244 residues long: MRRPNGMIAILTGAGISAESGISTFRDQNGLWENHRVEDVCTPAAFLKQPTVVQRFYNERRRALLSPEVKPNASHQALARLQREYKDGQVVIITQNIDDLHERAGSRQVLHMHGELLKVRCTATGRVFESREDVIHGESKCECCGVVETLRPHIVWFNEMPLYMDVIDEVVQNAGLFVAVGTSGNVYPAAGLVMIAKAHGAETLELNLEPSGNCRDFDRSVYGPASVIVPAWADEVLHGKGPAA.

The region spanning 1–239 is the Deacetylase sirtuin-type domain; that stretch reads MRRPNGMIAI…PAWADEVLHG (239 aa). Position 13-32 (13-32) interacts with NAD(+); sequence GAGISAESGISTFRDQNGLW. 2 residues coordinate substrate: Tyr57 and Arg60. 95 to 98 is an NAD(+) binding site; sequence QNID. Residue His113 is the Proton acceptor of the active site. The Zn(2+) site is built by Cys121 and Cys141. NAD(+) is bound by residues 181–183 and Ala225; that span reads GTS.

It belongs to the sirtuin family. Class III subfamily. Zn(2+) is required as a cofactor.

It localises to the mitochondrion. It catalyses the reaction N(6)-malonyl-L-lysyl-[protein] + NAD(+) + H2O = 2''-O-malonyl-ADP-D-ribose + nicotinamide + L-lysyl-[protein]. It carries out the reaction N(6)-succinyl-L-lysyl-[protein] + NAD(+) + H2O = 2''-O-succinyl-ADP-D-ribose + nicotinamide + L-lysyl-[protein]. The enzyme catalyses N(6)-glutaryl-L-lysyl-[protein] + NAD(+) + H2O = 2''-O-glutaryl-ADP-D-ribose + nicotinamide + L-lysyl-[protein]. NAD-dependent lysine demalonylase, desuccinylase and deglutarylase that specifically removes malonyl, succinyl and glutaryl groups on target proteins. Has weak NAD-dependent protein deacetylase activity; however this activity may not be physiologically relevant in vivo. The protein is NAD-dependent protein deacylase SIR2rp3 (SIR2rp3) of Trypanosoma brucei brucei (strain 927/4 GUTat10.1).